The following is a 295-amino-acid chain: uncharacterized protein (295 aa).

This is an uncharacterized protein from Rickettsia prowazekii (strain Madrid E).